The chain runs to 233 residues: Large ribosomal subunit protein uL1 (233 aa).

It belongs to the universal ribosomal protein uL1 family. In terms of assembly, part of the 50S ribosomal subunit.

Functionally, binds directly to 23S rRNA. The L1 stalk is quite mobile in the ribosome, and is involved in E site tRNA release. Its function is as follows. Protein L1 is also a translational repressor protein, it controls the translation of the L11 operon by binding to its mRNA. This chain is Large ribosomal subunit protein uL1, found in Campylobacter jejuni subsp. doylei (strain ATCC BAA-1458 / RM4099 / 269.97).